Reading from the N-terminus, the 198-residue chain is Mediator of RNA polymerase II transcription subunit 22 (198 aa).

Residues 159 to 198 (WGSPEMTSDPSHANHEVSDHLGSQESMQRHRNGSGTSEQS) are disordered.

It belongs to the Mediator complex subunit 22 family. In terms of assembly, component of the Mediator complex.

The protein resides in the nucleus. Functionally, component of the Mediator complex, a coactivator involved in the regulated transcription of nearly all RNA polymerase II-dependent genes. Mediator functions as a bridge to convey information from gene-specific regulatory proteins to the basal RNA polymerase II transcription machinery. Mediator is recruited to promoters by direct interactions with regulatory proteins and serves as a scaffold for the assembly of a functional preinitiation complex with RNA polymerase II and the general transcription factors. This chain is Mediator of RNA polymerase II transcription subunit 22 (med22), found in Danio rerio (Zebrafish).